The primary structure comprises 440 residues: MSSMTPREIVHELDKHIVGQQDAKRAVAIALRNRWRRMQLPADMRSEVTPKNILMIGPTGVGKTEIARRLAKLANAPFIKVEATKFTEVGYVGRDVESIIRDLVDVAIKLRREQAMKAVQYRAAEAAEERILDVLLPPARDTSEEESKHESSTRQIFRKKLREGQLDDKEIEIDVAAASVGVEIMAPPGMEEMTSQLQNMFSSLGRERTKKTKMTVKKAFKQLQDEEAAKLVSEEDIKTQALETVEQNGIVFIDEIDKVARRGNVSGADVSREGVQRDLLPLIEGCTVSTKHGMVKTDHILFITSGAFHLSKPSDLIPELQGRLPIRVELQALTPDDFERILTEPKASLTEQQQALLKTEGVDIQFTQDGIRRIAETAFDVNERTENIGARRLHTILERLLEDVSFDAGNDTSSIRIDGAYVDAHLGELAKNEDLSRYIL.

ATP-binding positions include Val18, 60 to 65, Asp254, Glu319, and Arg391; that span reads GVGKTE.

This sequence belongs to the ClpX chaperone family. HslU subfamily. In terms of assembly, a double ring-shaped homohexamer of HslV is capped on each side by a ring-shaped HslU homohexamer. The assembly of the HslU/HslV complex is dependent on binding of ATP.

The protein resides in the cytoplasm. In terms of biological role, ATPase subunit of a proteasome-like degradation complex; this subunit has chaperone activity. The binding of ATP and its subsequent hydrolysis by HslU are essential for unfolding of protein substrates subsequently hydrolyzed by HslV. HslU recognizes the N-terminal part of its protein substrates and unfolds these before they are guided to HslV for hydrolysis. The sequence is that of ATP-dependent protease ATPase subunit HslU from Cellvibrio japonicus (strain Ueda107) (Pseudomonas fluorescens subsp. cellulosa).